Reading from the N-terminus, the 245-residue chain is 1-(5-phosphoribosyl)-5-[(5-phosphoribosylamino)methylideneamino] imidazole-4-carboxamide isomerase (245 aa).

The Proton acceptor role is filled by aspartate 7. Catalysis depends on aspartate 129, which acts as the Proton donor.

Belongs to the HisA/HisF family.

The protein localises to the cytoplasm. The catalysed reaction is 1-(5-phospho-beta-D-ribosyl)-5-[(5-phospho-beta-D-ribosylamino)methylideneamino]imidazole-4-carboxamide = 5-[(5-phospho-1-deoxy-D-ribulos-1-ylimino)methylamino]-1-(5-phospho-beta-D-ribosyl)imidazole-4-carboxamide. It participates in amino-acid biosynthesis; L-histidine biosynthesis; L-histidine from 5-phospho-alpha-D-ribose 1-diphosphate: step 4/9. This Salmonella arizonae (strain ATCC BAA-731 / CDC346-86 / RSK2980) protein is 1-(5-phosphoribosyl)-5-[(5-phosphoribosylamino)methylideneamino] imidazole-4-carboxamide isomerase.